Reading from the N-terminus, the 114-residue chain is Lymphotactin (114 aa).

An N-terminal signal peptide occupies residues 1-21 (MRLLILALLGICSLTAYIVEG). Cysteine 32 and cysteine 69 form a disulfide bridge. The segment at 91–114 (RNNMIQTKPTGTQQSTNTAVTLTG) is disordered.

It belongs to the intercrine gamma family. Highest level in spleen, lower in peripheral leukocytes and very low levels in lung, colon and small intestine.

It localises to the secreted. In terms of biological role, chemotactic activity for lymphocytes but not for monocytes or neutrophils. In thymus, mediates medullary accumulation of thymic dendritic cells and contributes to regulatoy T cell development, playing a role in self-tolerance establishment. This Homo sapiens (Human) protein is Lymphotactin (XCL1).